Consider the following 296-residue polypeptide: Bifunctional protein FolD (296 aa).

NADP(+) contacts are provided by residues 166–168, Ser-195, and Ile-236; that span reads GRS.

Belongs to the tetrahydrofolate dehydrogenase/cyclohydrolase family. As to quaternary structure, homodimer.

It catalyses the reaction (6R)-5,10-methylene-5,6,7,8-tetrahydrofolate + NADP(+) = (6R)-5,10-methenyltetrahydrofolate + NADPH. It carries out the reaction (6R)-5,10-methenyltetrahydrofolate + H2O = (6R)-10-formyltetrahydrofolate + H(+). It participates in one-carbon metabolism; tetrahydrofolate interconversion. Catalyzes the oxidation of 5,10-methylenetetrahydrofolate to 5,10-methenyltetrahydrofolate and then the hydrolysis of 5,10-methenyltetrahydrofolate to 10-formyltetrahydrofolate. This is Bifunctional protein FolD from Chlorobium limicola (strain DSM 245 / NBRC 103803 / 6330).